The chain runs to 605 residues: Protein cueball (605 aa).

A signal peptide spans 1–31; sequence MAYIDQKHNTFWDDFAIALRDKIVFLNSTWG. Asparagine 27, asparagine 64, and asparagine 85 each carry an N-linked (GlcNAc...) asparagine glycan. The Extracellular segment spans residues 32–486; sequence EIHASAHRFE…QCGPAPPVQG (455 aa). 4 LDL-receptor class B repeats span residues 53–97, 98–145, 146–190, and 191–236; these read EMIY…DPLN, RNLF…DICR, RQLY…DQLS, and DRIF…NEDA. Residues asparagine 261 and asparagine 314 are each glycosylated (N-linked (GlcNAc...) asparagine). 2 EGF-like domains span residues 322 to 359 and 394 to 431; these read EGDR…ARCE and EYHK…ERCE. Disulfide bonds link cysteine 334–cysteine 347, cysteine 349–cysteine 358, cysteine 398–cysteine 408, cysteine 402–cysteine 419, and cysteine 421–cysteine 430. Residues asparagine 433 and asparagine 464 are each glycosylated (N-linked (GlcNAc...) asparagine). The helical transmembrane segment at 487–507 threads the bilayer; that stretch reads PLIIVIVLGLVTTSGLVALTV. Over 508–605 the chain is Cytoplasmic; sequence HGVRLIYKPK…IHSMEDNLLS (98 aa).

This sequence belongs to the cueball family.

Its subcellular location is the cell membrane. Functionally, has a role in spermatogenesis and oogenesis. The protein is Protein cueball of Drosophila grimshawi (Hawaiian fruit fly).